Consider the following 351-residue polypeptide: MAPMGIRLSPLGIGVFCLLALGVLYHVYSGFLTGRFAAFLLGDRAGDTVDLRELLAVSVRAAELGGVEVKKVRESNSLNEKAKGKTREGEDEKMTSGDVLSNKKMYHLIKNAFPAVLVNTEEQVDPDEEDAVSWDHDIPDEIKDKIKTSKPVSSESITIWIDPLDATHEYAENLVKYVTTMVCVAVNGKPVIGVIHKPFTGYTAWAMVDEGANIKKRSSYNEKTPTFIVSRSHSGEVKEVTRQTFGNKTEIISAGGAGYKVLSLLDVTADEQEKADVYIHVTYIKKWDICAGNAILNALGGHMTTLKGEEISYTGSEQNEGGLLASIGMDHSALVGKLAEKISVNAKKPAK.

Residues 11–31 (LGIGVFCLLALGVLYHVYSGF) traverse the membrane as a helical segment. Residues E121, D162, L164, D165, and D288 each contribute to the Mg(2+) site. E121 is a substrate binding site. Substrate-binding positions include 164–167 (LDAT) and D288.

The protein belongs to the inositol monophosphatase superfamily. Mg(2+) serves as cofactor.

Its subcellular location is the membrane. The enzyme catalyses a myo-inositol phosphate + H2O = myo-inositol + phosphate. It functions in the pathway polyol metabolism; myo-inositol biosynthesis; myo-inositol from D-glucose 6-phosphate: step 2/2. This Xenopus laevis (African clawed frog) protein is Inositol monophosphatase 3 (bpnt2).